The sequence spans 256 residues: Thioredoxin-dependent peroxide reductase, mitochondrial (256 aa).

The N-terminal 61 residues, 1–61, are a transit peptide targeting the mitochondrion; sequence MAAAVGRLLR…KLFSTSSSYH (61 aa). Residues 63–221 enclose the Thioredoxin domain; sequence PAVTQHAPYF…TLRLVKAFQY (159 aa). Lys83 bears the N6-succinyllysine mark. An N6-acetyllysine; alternate modification is found at Lys91. Position 91 is an N6-succinyllysine; alternate (Lys91). The active-site Cysteine sulfenic acid (-SOH) intermediate is Cys108. Thr146 bears the Phosphothreonine mark.

It belongs to the peroxiredoxin family. AhpC/Prx1 subfamily. Homodimer; disulfide-linked, upon oxidation. 6 homodimers assemble to form a ring-like dodecamer. Interacts with NEK6. Interacts with LRRK2. Interacts with MAP3K13. Interacts with RPS6KC1 (via PX domain). In terms of processing, phosphorylated by LRRK2; phosphorylation reduces perodixase activity. Post-translationally, the enzyme can be inactivated by further oxidation of the cysteine sulfenic acid (C(P)-SOH) to sulphinic acid (C(P)-SO2H) and sulphonic acid (C(P)-SO3H) instead of its condensation to a disulfide bond. S-palmitoylated.

The protein localises to the mitochondrion. The protein resides in the cytoplasm. It localises to the early endosome. It catalyses the reaction a hydroperoxide + [thioredoxin]-dithiol = an alcohol + [thioredoxin]-disulfide + H2O. Its function is as follows. Thiol-specific peroxidase that catalyzes the reduction of hydrogen peroxide and organic hydroperoxides to water and alcohols, respectively. Plays a role in cell protection against oxidative stress by detoxifying peroxides. Acts synergistically with MAP3K13 to regulate the activation of NF-kappa-B in the cytosol. Required for the maintenance of physical strength. This Pongo abelii (Sumatran orangutan) protein is Thioredoxin-dependent peroxide reductase, mitochondrial (PRDX3).